A 549-amino-acid chain; its full sequence is CTP synthase (549 aa).

The interval 1–272 (MPPKSSTTKH…DAYVVRRMDL (272 aa)) is amidoligase domain. Serine 19 is a binding site for CTP. Serine 19 contributes to the UTP binding site. ATP is bound by residues 20–25 (SLGKGL) and aspartate 77. Mg(2+) is bound by residues aspartate 77 and glutamate 146. Residues 153 to 155 (DIE), 193 to 198 (KTKPTQ), and lysine 229 contribute to the CTP site. UTP-binding positions include 193 to 198 (KTKPTQ) and lysine 229. Residues 301-548 (VGKYIDLPDA…VKAAVERKTS (248 aa)) enclose the Glutamine amidotransferase type-1 domain. Residue glycine 360 coordinates L-glutamine. Residue cysteine 387 is the Nucleophile; for glutamine hydrolysis of the active site. L-glutamine-binding positions include 388–391 (LGLQ), glutamate 411, and arginine 473. Residues histidine 521 and glutamate 523 contribute to the active site.

Belongs to the CTP synthase family. In terms of assembly, homotetramer.

It catalyses the reaction UTP + L-glutamine + ATP + H2O = CTP + L-glutamate + ADP + phosphate + 2 H(+). It carries out the reaction L-glutamine + H2O = L-glutamate + NH4(+). The catalysed reaction is UTP + NH4(+) + ATP = CTP + ADP + phosphate + 2 H(+). It functions in the pathway pyrimidine metabolism; CTP biosynthesis via de novo pathway; CTP from UDP: step 2/2. Allosterically activated by GTP, when glutamine is the substrate; GTP has no effect on the reaction when ammonia is the substrate. The allosteric effector GTP functions by stabilizing the protein conformation that binds the tetrahedral intermediate(s) formed during glutamine hydrolysis. Inhibited by the product CTP, via allosteric rather than competitive inhibition. Its function is as follows. Catalyzes the ATP-dependent amination of UTP to CTP with either L-glutamine or ammonia as the source of nitrogen. Regulates intracellular CTP levels through interactions with the four ribonucleotide triphosphates. The protein is CTP synthase of Streptomyces coelicolor (strain ATCC BAA-471 / A3(2) / M145).